A 521-amino-acid chain; its full sequence is Bifunctional purine biosynthesis protein PurH (521 aa).

The region spanning 1 to 145 is the MGS-like domain; it reads MIKQALISVS…KNHRDVTVVV (145 aa).

Belongs to the PurH family.

The enzyme catalyses (6R)-10-formyltetrahydrofolate + 5-amino-1-(5-phospho-beta-D-ribosyl)imidazole-4-carboxamide = 5-formamido-1-(5-phospho-D-ribosyl)imidazole-4-carboxamide + (6S)-5,6,7,8-tetrahydrofolate. It carries out the reaction IMP + H2O = 5-formamido-1-(5-phospho-D-ribosyl)imidazole-4-carboxamide. Its pathway is purine metabolism; IMP biosynthesis via de novo pathway; 5-formamido-1-(5-phospho-D-ribosyl)imidazole-4-carboxamide from 5-amino-1-(5-phospho-D-ribosyl)imidazole-4-carboxamide (10-formyl THF route): step 1/1. It functions in the pathway purine metabolism; IMP biosynthesis via de novo pathway; IMP from 5-formamido-1-(5-phospho-D-ribosyl)imidazole-4-carboxamide: step 1/1. In Burkholderia cenocepacia (strain ATCC BAA-245 / DSM 16553 / LMG 16656 / NCTC 13227 / J2315 / CF5610) (Burkholderia cepacia (strain J2315)), this protein is Bifunctional purine biosynthesis protein PurH.